The primary structure comprises 274 residues: Energy-coupling factor transporter ATP-binding protein EcfA (274 aa).

The ABC transporter domain occupies 2 to 235; sequence IRLENVSYNY…LSLRYLGLTP (234 aa). An ATP-binding site is contributed by 35–42; it reads GKNGSGKS.

This sequence belongs to the ABC transporter superfamily. Energy-coupling factor EcfA family. As to quaternary structure, forms a stable energy-coupling factor (ECF) transporter complex composed of 2 membrane-embedded substrate-binding proteins (S component), 2 ATP-binding proteins (A component) and 2 transmembrane proteins (T component).

Its subcellular location is the cell membrane. ATP-binding (A) component of a common energy-coupling factor (ECF) ABC-transporter complex. Unlike classic ABC transporters this ECF transporter provides the energy necessary to transport a number of different substrates. This is Energy-coupling factor transporter ATP-binding protein EcfA from Methanosarcina acetivorans (strain ATCC 35395 / DSM 2834 / JCM 12185 / C2A).